The sequence spans 163 residues: MPSFDIVSEITLHEVRNAVENANRVLSTRYDFRGVEAVIELNEKNETIKITTESDFQLEQLIEILIGACIKRGIEHSSLDIPAESEHHGKLYSKEIKLKQGIETEMAKKITKLVKDSKIKVQTQIQGEQVRVTGKSRDDLQAVIQLVKGAELGQPFQFNNFRD.

Belongs to the YajQ family.

In terms of biological role, nucleotide-binding protein. The sequence is that of Nucleotide-binding protein CGSHiGG_08790 from Haemophilus influenzae (strain PittGG).